We begin with the raw amino-acid sequence, 567 residues long: WD repeat-containing protein 20 (567 aa).

An N-acetylalanine modification is found at alanine 2. 4 WD repeats span residues 147 to 187, 216 to 257, 258 to 297, and 345 to 389; these read IDKS…GTTA, VGEG…GTMK, SYFGGLLCLCWSPDGKYIVTGGEDDLVTVWSFLDCRVIAR, and STQS…LFPH. 2 positions are modified to phosphoserine: serine 355 and serine 358. The tract at residues 408-441 is disordered; the sequence is PAGSNGSAVTTPGNSVPPPLPRSNSLPHSAVSNA. Composition is skewed to polar residues over residues 411–421 and 429–441; these read SNGSAVTTPGN and RSNSLPHSAVSNA. Phosphoserine occurs at positions 430, 432, and 463. Residues 468–481 show a composition bias toward basic residues; the sequence is KERHHEKDRKRNHS. Positions 468-493 are disordered; it reads KERHHEKDRKRNHSMGHISSKSSDKL. Residues 529-566 form a WD 5 repeat; sequence IAHERLTVLVFLEDCIVTACQEGFICTWARPGKVSKFQ.

As to quaternary structure, interacts with USP12; promotes translocation of USP12/WDR20 to the plasma membrane. Component of the USP12/WDR20/WDR48 deubiquitinating complex. Interacts with USP46; contributes to the cytoplasmic localization of the USP46/WDR20 complex. Component of the USP12/DMWD/WDR48 deubiquitinating complex.

It localises to the cytoplasm. It is found in the nucleus. Regulator of deubiquitinating complexes. Activates deubiquitinating activity of complexes containing USP12. Anchors at the base of the ubiquitin-contacting loop of USP12 and remotely modulates the catalytic center of the enzyme. Regulates shuttling of complexes containing USP12 between the plasma membrane, cytoplasm and nucleus. The protein is WD repeat-containing protein 20 (Wdr20) of Mus musculus (Mouse).